The primary structure comprises 1226 residues: Integrin alpha pat-2 (1226 aa).

A signal peptide spans 1-25 (MREGSFPRRIGLLLGLLGLLAGVAT). The Extracellular portion of the chain corresponds to 26–1154 (FNIDTKNVVV…IASEEGRDLP (1129 aa)). FG-GAP repeat units follow at residues 27–94 (NIDT…TCRE), 108–171 (NGSH…NAEE), 178–233 (EPAR…TDRP), 234–290 (NTEY…MMIN), 291–345 (LTDE…KPQY), 362–421 (GKQI…GVRE), and 425–488 (QKIE…PESA). N-linked (GlcNAc...) asparagine glycans are attached at residues Asn-108, Asn-228, and Asn-290. N-linked (GlcNAc...) asparagine glycosylation occurs at Asn-608. The Cell attachment site motif lies at 620-622 (RGD). Asn-679 is a glycosylation site (N-linked (GlcNAc...) asparagine). Residues 709–733 (SVGGDGSKSAPACSPTSDEPDSDGK) form a disordered region. Residues Asn-775 and Asn-819 are each glycosylated (N-linked (GlcNAc...) asparagine). Disordered regions lie at residues 898–958 (LRIT…HVYE) and 982–1040 (DYEY…ARFS). The segment covering 920 to 931 (REEDDESYEDET) has biased composition (acidic residues). The span at 932–951 (TTQSQSTRHQSTQHQTHHQS) shows a compositional bias: low complexity. Residues 985–1005 (YIPDDQEYDGDDFEEEDDEDF) are compositionally biased toward acidic residues. A compositionally biased stretch (basic residues) spans 1010–1026 (SKRVKRNPTPKKKKKGG). Basic and acidic residues predominate over residues 1027 to 1040 (EHRGEPRSDKARFS). The helical transmembrane segment at 1155–1177 (WWLYLLAILIGLAILILLILLLW) threads the bilayer. Residues 1178 to 1226 (RCGFFKRNRPPTEHAELRADRQPNAQYADSQSRYTSQDQYNQGRHGQML) lie on the Cytoplasmic side of the membrane. Residues 1191–1226 (HAELRADRQPNAQYADSQSRYTSQDQYNQGRHGQML) form a disordered region. Over residues 1200-1226 (PNAQYADSQSRYTSQDQYNQGRHGQML) the composition is skewed to polar residues.

Belongs to the integrin alpha chain family. As to quaternary structure, heterodimer of an alpha and a beta subunit. Interacts with beta subunit pat-3. Interacts with dep-1. Component of an integrin containing attachment complex, composed of at least pat-2, pat-3, pat-4, pat-6, unc-52, unc-97 and unc-112. As to expression, expressed in body-wall muscle cells, distal tip cells, and vulval tissue.

It is found in the membrane. Its function is as follows. Required for muscle development probably through the regulation of the actin-myosin cytoskeleton. Component of an integrin containing attachment complex, which is required for muscle maintenance. During the formation of neuromuscular junctions at the larval stage, negatively regulates membrane protrusion from body wall muscles, probably through lamins such as epi-1, lam-2 and unc-52. Required for distal tip cell migration and dorsal pathfinding. Required for egg-laying. May play a role in cell motility and cell-cell interactions. Plays a role in vulval development. Probably within the alpha pat-2/beta pat-3 integrin receptor complex, plays a role in the negative regulation of let-23 signaling and vulval induction. This is probably partly by restricting the mobility of the let-23 receptor on the plasma membrane of vulval cells which thereby attenuates let-23 signaling. This chain is Integrin alpha pat-2, found in Caenorhabditis elegans.